The following is a 334-amino-acid chain: Hemin transport system permease protein HmuU (334 aa).

9 helical membrane-spanning segments follow: residues 9-29 (LMLG…ANMG), 60-80 (LLAV…QGLF), 96-116 (AALC…LLAL), 117-137 (YSHM…IFTL), 149-169 (LLAG…LTYI), 191-211 (WSTL…GLLQ), 244-264 (AILI…GLVV), 278-298 (WLLP…DTLA), and 306-326 (EMPV…WLIL).

The protein belongs to the binding-protein-dependent transport system permease family. FecCD subfamily.

It is found in the cell inner membrane. Part of the binding-protein-dependent transport system for hemin; probably responsible for the translocation of the substrate across the membrane. In Yersinia pestis, this protein is Hemin transport system permease protein HmuU (hmuU).